A 1383-amino-acid polypeptide reads, in one-letter code: Insulin receptor (1383 aa).

Residues 1–26 (MGSGRGCETTAVPLLMAVAVAGGTAG) form the signal peptide. Extracellular-side segments run 27 to 759 (HLYP…TRPS) and 764 to 957 (SLEE…NIAK). C34 and C52 form a disulfide bridge. N42, N51, N104, and N137 each carry an N-linked (GlcNAc...) asparagine glycan. 9 disulfides stabilise this stretch: C152–C181, C185–C208, C195–C214, C218–C227, C222–C233, C234–C242, C238–C251, C254–C263, and C267–C279. N241 carries N-linked (GlcNAc...) asparagine glycosylation. An N-linked (GlcNAc...) asparagine glycan is attached at N281. 5 cysteine pairs are disulfide-bonded: C285–C310, C292–C300, C314–C327, C330–C334, and C338–C359. A glycan (N-linked (GlcNAc...) asparagine) is linked at N321. N363 carries an N-linked (GlcNAc...) asparagine glycan. S399 is subject to Phosphoserine. At Y400 the chain carries Phosphotyrosine. Phosphoserine is present on S406. N-linked (GlcNAc...) asparagine glycans are attached at residues N423 and N444. A disulfide bridge connects residues C461 and C494. N-linked (GlcNAc...) asparagine glycosylation is found at N540, N634, N652, and N699. The Fibronectin type-III 1 domain maps to 625-727 (VPLDPISVSN…SQILKELEES (103 aa)). The cysteines at positions 675 and 900 are disulfide-linked. Residues 687–709 (SPPFESDDSQKHNQSEYDDSASE) are disordered. Residues 734–742 (EDYLHNVVF) form an insulin-binding region. The disordered stretch occupies residues 747–783 (TSSGNGAEDTRPSRKRRSLEEVGNVTATTPTLPDFPN). Fibronectin type-III domains follow at residues 754 to 848 (EDTR…TMPE) and 854 to 948 (IVGP…VTDY). N770, N783, N921, and N934 each carry an N-linked (GlcNAc...) asparagine glycan. Polar residues predominate over residues 771–783 (VTATTPTLPDFPN). The helical transmembrane segment at 958 to 978 (IIIGPLIFVFLFSVVIGSIYL) threads the bilayer. Residues 979–1383 (FLRKRQPDGP…VLTLPRSNPS (405 aa)) lie on the Cytoplasmic side of the membrane. Residues 997-1000 (NPEY) are important for interaction with IRS1, SHC1 and STAT5B. At Y1000 the chain carries Phosphotyrosine; by autocatalysis. The 276-residue stretch at 1024–1299 (ITLLRELGQG…LLKDDLHPSF (276 aa)) folds into the Protein kinase domain. 2 residues coordinate ATP: S1034 and K1058. K1080 is covalently cross-linked (Glycyl lysine isopeptide (Lys-Gly) (interchain with G-Cter in ubiquitin)). Position 1084 is an S-nitrosocysteine (C1084). 1105 to 1111 (ELMAHGD) serves as a coordination point for ATP. The Proton donor/acceptor role is filled by D1160. ATP is bound by residues 1164–1165 (RN) and D1178. Residues Y1186, Y1190, Y1191, Y1356, and Y1362 each carry the phosphotyrosine; by autocatalysis modification. The segment at 1361-1383 (PYTHMNGGKKNGRVLTLPRSNPS) is disordered. The segment at 1362 to 1365 (YTHM) is PIK3R1 binding.

Belongs to the protein kinase superfamily. Tyr protein kinase family. Insulin receptor subfamily. As to quaternary structure, tetramer of 2 alpha and 2 beta chains linked by disulfide bonds. The alpha chains carry the insulin-binding regions, while the beta chains carry the kinase domain. Forms a hybrid receptor with IGF1R, the hybrid is a tetramer consisting of 1 alpha chain and 1 beta chain of INSR and 1 alpha chain and 1 beta chain of IGF1R. Interacts with SORBS1 but dissociates from it following insulin stimulation. Binds SH2B2. Activated form of INSR interacts (via Tyr-1000) with the PTB/PID domains of IRS1 and SHC1. The sequences surrounding the phosphorylated NPXY motif contribute differentially to either IRS1 or SHC1 recognition. Interacts (via tyrosines in the C-terminus) with IRS2 (via PTB domain and 591-786 AA); the 591-786 would be the primary anchor of IRS2 to INSR while the PTB domain would have a stabilizing action on the interaction with INSR. Interacts with the SH2 domains of the 85 kDa regulatory subunit of PI3K (PIK3R1) in vitro, when autophosphorylated on tyrosine residues. Interacts with SOCS7. Interacts (via the phosphorylated Tyr-1000), with SOCS3. Interacts (via the phosphorylated Tyr-1186, Tyr-1190, Tyr-1191) with SOCS1. Interacts with ARRB2. Interacts with GRB10; this interaction blocks the association between IRS1/IRS2 and INSR, significantly reduces insulin-stimulated tyrosine phosphorylation of IRS1 and IRS2 and thus decreases insulin signaling. Interacts with PDPK1. Interacts (via Tyr-1191) with GRB14 (via BPS domain); this interaction protects the tyrosines in the activation loop from dephosphorylation, but promotes dephosphorylation of Tyr-1000, this results in decreased interaction with, and phosphorylation of, IRS1. Interacts (via subunit alpha) with ENPP1 (via 485-599 AA); this interaction blocks autophosphorylation. Interacts with PTPRE; this interaction is dependent of Tyr-1186, Tyr-1190 and Tyr-1191 of the INSR. Interacts with STAT5B (via SH2 domain). Interacts with PTPRF. Interacts with GRB7. Interacts with CAV2 (tyrosine-phosphorylated form); the interaction is increased with 'Tyr-27'phosphorylation of CAV2. Interacts with ATIC; ATIC together with PRKAA2/AMPK2 and HACD3/PTPLAD1 is proposed to be part of a signaling netwok regulating INSR autophosphorylation and endocytosis. Interacts with the insulin receptor SORL1; this interaction strongly increases its surface exposure, hence strengthens insulin signal reception. Interacts (tyrosine phosphorylated) with CCDC88A/GIV (via SH2-like region); binding requires autophosphorylation of the Insr C-terminal region. Interacts with GNAI3; the interaction is probably mediated by CCDC88A/GIV. Interacts with LMBRD1. Interacts (in response to insulin stimulation) with NCK1; this interaction may recruit PTPN1 to mediate INSR dephosphorylation. Interacts with CD248; this interaction diminishes INSR autophosphorylation. Post-translationally, after being transported from the endoplasmic reticulum to the Golgi apparatus, the single glycosylated precursor is further glycosylated and then cleaved, followed by its transport to the plasma membrane. Autophosphorylated on tyrosine residues in response to insulin. Phosphorylation of Tyr-1000 is required for binding to IRS1, SHC1 and STAT5B. May also be phosphorylated at Tyr-1186 and Tyr-1191 by mTORC2. Dephosphorylated by PTPRE at Tyr-1000, Tyr-1186, Tyr-1190 and Tyr-1191. Dephosphorylated by PTPRF and PTPN1. Dephosphorylated by PTPN2; down-regulates insulin-induced signaling. In terms of processing, S-nitrosylation at Cys-1084 by BLVRB inhibits the receptor tyrosine kinase, thereby inhibiting insulin signaling. Post-translationally, ubiquitinated by MARCHF1; leading to degradation thereby reducing surface INSR expression.

Its subcellular location is the cell membrane. The protein localises to the late endosome. The protein resides in the lysosome. It catalyses the reaction L-tyrosyl-[protein] + ATP = O-phospho-L-tyrosyl-[protein] + ADP + H(+). Its activity is regulated as follows. Activated in response to insulin. Autophosphorylation activates the kinase activity. PTPN1, PTPRE and PTPRF dephosphorylate important tyrosine residues, thereby reducing INSR activity. Inhibited by ENPP1. GRB10 and GRB14 inhibit the catalytic activity of the INSR, they block access of substrates to the activated receptor. SOCS1 and SOCS3 act as negative regulators of INSR activity, they bind to the activated INRS and interfere with the phosphorylation of INSR substrates. Receptor tyrosine kinase which mediates the pleiotropic actions of insulin. Binding of insulin leads to phosphorylation of several intracellular substrates, including, insulin receptor substrates (IRS1, 2, 3, 4), SHC, GAB1, CBL and other signaling intermediates. Each of these phosphorylated proteins serve as docking proteins for other signaling proteins that contain Src-homology-2 domains (SH2 domain) that specifically recognize different phosphotyrosine residues, including the p85 regulatory subunit of PI3K and SHP2. Phosphorylation of IRSs proteins lead to the activation of two main signaling pathways: the PI3K-AKT/PKB pathway, which is responsible for most of the metabolic actions of insulin, and the Ras-MAPK pathway, which regulates expression of some genes and cooperates with the PI3K pathway to control cell growth and differentiation. Binding of the SH2 domains of PI3K to phosphotyrosines on IRS1 leads to the activation of PI3K and the generation of phosphatidylinositol-(3, 4, 5)-triphosphate (PIP3), a lipid second messenger, which activates several PIP3-dependent serine/threonine kinases, such as PDPK1 and subsequently AKT/PKB. The net effect of this pathway is to produce a translocation of the glucose transporter SLC2A4/GLUT4 from cytoplasmic vesicles to the cell membrane to facilitate glucose transport. Moreover, upon insulin stimulation, activated AKT/PKB is responsible for: anti-apoptotic effect of insulin by inducing phosphorylation of BAD; regulates the expression of gluconeogenic and lipogenic enzymes by controlling the activity of the winged helix or forkhead (FOX) class of transcription factors. Another pathway regulated by PI3K-AKT/PKB activation is mTORC1 signaling pathway which regulates cell growth and metabolism and integrates signals from insulin. AKT mediates insulin-stimulated protein synthesis by phosphorylating TSC2 thereby activating mTORC1 pathway. The Ras/RAF/MAP2K/MAPK pathway is mainly involved in mediating cell growth, survival and cellular differentiation of insulin. Phosphorylated IRS1 recruits GRB2/SOS complex, which triggers the activation of the Ras/RAF/MAP2K/MAPK pathway. In addition to binding insulin, the insulin receptor can bind insulin-like growth factors (IGFI and IGFII). When present in a hybrid receptor with IGF1R, binds IGF1. In adipocytes, inhibits lipolysis. This is Insulin receptor (Insr) from Rattus norvegicus (Rat).